A 149-amino-acid polypeptide reads, in one-letter code: MKSTLRISLKSGEKIFINGAVLRVDRKVALEFLNDVTFLLENHVLQPDQATTPLRQLYFIAQMILINPEGREQSTNMFRKSVSMLLNCFQHDEILAELKRIDGLVASGKAFEALKAIRGLYTIEEKILSNQEMTPATIEQIRKEIAPWR.

It belongs to the FlbT family.

In terms of biological role, has a post-transcriptional repressor function in flagellum biogenesis. Associates with the 5'-UTR of fljK mRNA and promotes its degradation. This is Probable flagellum biosynthesis repressor protein FlbT from Agrobacterium fabrum (strain C58 / ATCC 33970) (Agrobacterium tumefaciens (strain C58)).